A 254-amino-acid polypeptide reads, in one-letter code: uncharacterized protein (254 aa).

Residues Ile14–Lys81 form the S4 RNA-binding domain. Residue Asp119 is the Nucleophile of the active site.

Belongs to the pseudouridine synthase RsuA family.

It carries out the reaction a uridine in RNA = a pseudouridine in RNA. This is an uncharacterized protein from Mycobacterium bovis (strain ATCC BAA-935 / AF2122/97).